The chain runs to 160 residues: 3-hydroxyacyl-[acyl-carrier-protein] dehydratase FabZ (160 aa).

H58 is a catalytic residue.

Belongs to the thioester dehydratase family. FabZ subfamily.

Its subcellular location is the cytoplasm. It carries out the reaction a (3R)-hydroxyacyl-[ACP] = a (2E)-enoyl-[ACP] + H2O. In terms of biological role, involved in unsaturated fatty acids biosynthesis. Catalyzes the dehydration of short chain beta-hydroxyacyl-ACPs and long chain saturated and unsaturated beta-hydroxyacyl-ACPs. This Ruegeria sp. (strain TM1040) (Silicibacter sp.) protein is 3-hydroxyacyl-[acyl-carrier-protein] dehydratase FabZ.